A 318-amino-acid polypeptide reads, in one-letter code: UDP-3-O-acylglucosamine N-acyltransferase 1 (318 aa).

His230 acts as the Proton acceptor in catalysis.

It belongs to the transferase hexapeptide repeat family. LpxD subfamily. As to quaternary structure, homotrimer.

It carries out the reaction a UDP-3-O-[(3R)-3-hydroxyacyl]-alpha-D-glucosamine + a (3R)-hydroxyacyl-[ACP] = a UDP-2-N,3-O-bis[(3R)-3-hydroxyacyl]-alpha-D-glucosamine + holo-[ACP] + H(+). It functions in the pathway bacterial outer membrane biogenesis; LPS lipid A biosynthesis. In terms of biological role, catalyzes the N-acylation of UDP-3-O-acylglucosamine using 3-hydroxyacyl-ACP as the acyl donor. Is involved in the biosynthesis of lipid A, a phosphorylated glycolipid that anchors the lipopolysaccharide to the outer membrane of the cell. This Sulfurimonas denitrificans (strain ATCC 33889 / DSM 1251) (Thiomicrospira denitrificans (strain ATCC 33889 / DSM 1251)) protein is UDP-3-O-acylglucosamine N-acyltransferase 1.